The primary structure comprises 374 residues: uncharacterized protein (374 aa).

A disordered region spans residues 182-201 (PALGESPQGQKSSASSDKAV). Over residues 188–197 (PQGQKSSASS) the composition is skewed to polar residues.

This is an uncharacterized protein from Rattus norvegicus (Rat).